Reading from the N-terminus, the 116-residue chain is Fluoride-specific ion channel FluC 2 (116 aa).

2 helical membrane passes run 3–23 (LLTA…RYAV) and 43–63 (LLFG…AVTV). Positions 67 and 70 each coordinate Na(+). Residues 96–116 (VGTLAAALLAVFLGIALGAAL) traverse the membrane as a helical segment.

This sequence belongs to the fluoride channel Fluc/FEX (TC 1.A.43) family.

The protein localises to the cell membrane. It carries out the reaction fluoride(in) = fluoride(out). Its activity is regulated as follows. Na(+) is not transported, but it plays an essential structural role and its presence is essential for fluoride channel function. Fluoride-specific ion channel. Important for reducing fluoride concentration in the cell, thus reducing its toxicity. This is Fluoride-specific ion channel FluC 2 from Natronomonas pharaonis (strain ATCC 35678 / DSM 2160 / CIP 103997 / JCM 8858 / NBRC 14720 / NCIMB 2260 / Gabara) (Halobacterium pharaonis).